A 178-amino-acid polypeptide reads, in one-letter code: CD209 antigen-like protein C (178 aa).

Cys48 and Cys59 are oxidised to a cystine. Residues 54–169 enclose the C-type lectin domain; it reads VFQGNCYFFS…CTIKKYWICK (116 aa). Residue Asn70 is glycosylated (N-linked (GlcNAc...) asparagine). 2 disulfide bridges follow: Cys76–Cys168 and Cys147–Cys160. Ca(2+)-binding residues include Glu138, Asn140, Glu145, Asn156, and Asp157.

In terms of biological role, probable pathogen-recognition receptor. May recognize in a calcium-dependent manner high mannose N-linked oligosaccharides in a variety of pathogen antigens. The sequence is that of CD209 antigen-like protein C (Cd209c) from Mus musculus (Mouse).